We begin with the raw amino-acid sequence, 2009 residues long: Sodium channel protein type 1 subunit alpha (2009 aa).

Topologically, residues 1–128 (MEQTVLVPPG…KIAIKILVHS (128 aa)) are cytoplasmic. Over residues 28 to 48 (RIAEEKAKNPKPDKKDDDENG) the composition is skewed to basic and acidic residues. The interval 28 to 60 (RIAEEKAKNPKPDKKDDDENGPKPNSDLEAGKN) is disordered. An I repeat occupies 110–454 (ILTPFNPLRK…QQMLEQLKKQ (345 aa)). A helical membrane pass occupies residues 129–146 (LFSMLIMCTILTNCVFMT). Topologically, residues 147 to 152 (MSNPPD) are extracellular. Residues 153 to 177 (WTKNVEYTFTGIYTFESLIKIIARG) form a helical membrane-spanning segment. The Cytoplasmic portion of the chain corresponds to 178–188 (FCLEDFTFLRD). A helical membrane pass occupies residues 189 to 205 (PWNWLDFTVITFAYVTE). Residues 206-213 (FVDLGNVS) are Extracellular-facing. A helical transmembrane segment spans residues 214-235 (ALRTFRVLRALKTISVIPGLKT). The Cytoplasmic portion of the chain corresponds to 236–245 (IVGALIQSVK). The helical transmembrane segment at 246 to 269 (KLSDVMILTVFCLSVFALIGLQLF) threads the bilayer. At 270–369 (MGNLRNKCVQ…YGYTSFDTFS (100 aa)) the chain is on the extracellular side. Intrachain disulfides connect cysteine 277/cysteine 345 and cysteine 336/cysteine 351. Asparagine 295, asparagine 301, asparagine 306, and asparagine 338 each carry an N-linked (GlcNAc...) asparagine glycan. The segment at residues 370-384 (WAFLSLFRLMTQDFW) is an intramembrane region (pore-forming). The Extracellular portion of the chain corresponds to 385–397 (ENLYQLTLRAAGK). The helical transmembrane segment at 398-423 (TYMIFFVLVIFLGSFYLINLILAVVA) threads the bilayer. Over 424-768 (MAYEEQNQAT…HIVNLVVMDP (345 aa)) the chain is Cytoplasmic. Positions 455–528 (QEAAQQAAAT…EFHKSESEDS (74 aa)) are disordered. The segment covering 456–466 (EAAQQAAATTA) has biased composition (low complexity). Phosphoserine is present on serine 470. Residues 479–492 (LSDSSSEASKLSSK) show a composition bias toward low complexity. Basic residues predominate over residues 495 to 506 (KERRNRRKKRKQ). The segment covering 507–528 (KEQSGGEEKDDDEFHKSESEDS) has biased composition (basic and acidic residues). Phosphoserine occurs at positions 523, 525, 550, 551, 607, and 730. Residues 584–627 (VGSENDFADDEHSTFEDNESRRDSLFVPRRHGERRNSNLSQTSR) form a disordered region. Over residues 593-607 (DEHSTFEDNESRRDS) the composition is skewed to basic and acidic residues. The II repeat unit spans residues 750–1022 (CSPYWLKVKH…QIAVDRMHKG (273 aa)). A helical membrane pass occupies residues 769-787 (FVDLAITICIVLNTLFMAM). The Extracellular portion of the chain corresponds to 788–797 (EHYPMTEHFN). The helical transmembrane segment at 798–820 (HVLTVGNLVFTGIFTAEMFLKII) threads the bilayer. Topologically, residues 821–830 (AMDPYYYFQE) are cytoplasmic. The chain crosses the membrane as a helical span at residues 831–849 (GWNIFDGFIVTLSLVELGL). Over 850-854 (ANVEG) the chain is Extracellular. A helical transmembrane segment spans residues 855-874 (LSVLRSFRLLRVFKLAKSWP). The Cytoplasmic portion of the chain corresponds to 875–891 (TLNMLIKIIGNSVGALG). A helical membrane pass occupies residues 892-912 (NLTLVLAIIVFIFAVVGMQLF). The Extracellular portion of the chain corresponds to 913–938 (GKSYKDCVCKIATDCKLPRWHMNDFF). Cysteine 921 and cysteine 927 form a disulfide bridge. Residues 939 to 952 (HSFLIVFRVLCGEW) constitute an intramembrane region (pore-forming). Topologically, residues 953 to 965 (IETMWDCMEVAGQ) are extracellular. An intrachain disulfide couples cysteine 959 to cysteine 968. The chain crosses the membrane as a helical span at residues 966-992 (AMCLTVFMMVMVIGNLVVLNLFLALLL). Residues 993–1218 (SSFSADNLAA…RTCFRIVEHN (226 aa)) are Cytoplasmic-facing. The tract at residues 1129–1163 (TEDFSSESDLEESKEKLNESSSSSEGSTVDIGAPA) is disordered. One copy of the III repeat lies at 1200–1514 (RGKQWWNLRR…KKYYNAMKKL (315 aa)). A helical membrane pass occupies residues 1219–1237 (WFETFIVFMILLSSGALAF). Residues 1238–1250 (EDIYIDQRKTIKT) are Extracellular-facing. A helical membrane pass occupies residues 1251–1276 (MLEYADKVFTYIFILEMLLKWVAYGY). The Cytoplasmic portion of the chain corresponds to 1277 to 1278 (QT). Residues 1279 to 1304 (YFTNAWCWLDFLIVDVSLVSLTANAL) traverse the membrane as a helical segment. Over 1305-1313 (GYSELGAIK) the chain is Extracellular. A helical membrane pass occupies residues 1314-1332 (SLRTLRALRPLRALSRFEG). Residues 1333–1345 (MRVVVNALLGAIP) are Cytoplasmic-facing. A helical transmembrane segment spans residues 1346–1369 (SIMNVLLVCLIFWLIFSIMGVNLF). Residues 1370 to 1415 (AGKFYHCVNTTTGDIFEISEVNNHSDCLKLIERNETARWKNVKVNF) are Extracellular-facing. A disulfide bond links cysteine 1376 and cysteine 1396. The segment at residues 1416-1433 (DNVGFGYLSLLQVATFKG) is an intramembrane region (pore-forming). Residues 1434-1457 (WMDIMYAAVDSRNVELQPKYEESL) lie on the Extracellular side of the membrane. The chain crosses the membrane as a helical span at residues 1458–1483 (YMYLYFVIFIIFGSFFTLNLFIGVII). Residues 1484-1541 (DNFNQQKKKFGGQDIFMTEEQKKYYNAMKKLGSKKPQKPIPRPGNKFQGMVFDFVTRQ) lie on the Cytoplasmic side of the membrane. Serine 1516 is modified (phosphoserine; by PKC). The stretch at 1523-1821 (IPRPGNKFQG…WEKFDPDATQ (299 aa)) is one IV repeat. The chain crosses the membrane as a helical span at residues 1542 to 1560 (VFDISIMILICLNMVTMMV). The Extracellular segment spans residues 1561-1571 (ETDDQSDYVTS). Positions 1561-1571 (ETDDQSDYVTS) are S1-S2 loop of repeat IV. The chain crosses the membrane as a helical span at residues 1572 to 1593 (ILSRINLVFIVLFTGECVLKLI). At 1594-1601 (SLRHYYFT) the chain is on the cytoplasmic side. The helical transmembrane segment at 1602-1623 (IGWNIFDFVVVILSIVGMFLAE) threads the bilayer. Positions 1619–1636 (MFLAELIEKYFVSPTLFR) are S3b-S4 loop of repeat IV. Topologically, residues 1624 to 1636 (LIEKYFVSPTLFR) are extracellular. Residues 1637 to 1655 (VIRLARIGRILRLIKGAKG) form a helical membrane-spanning segment. Over 1656-1665 (IRTLLFALMM) the chain is Cytoplasmic. Residues 1666–1688 (SLPALFNIGLLLFLVMFIYAIFG) form a helical membrane-spanning segment. The Extracellular segment spans residues 1689 to 1711 (MSNFAYVKREVGIDDMFNFETFG). An intramembrane region (pore-forming) is located at residues 1712 to 1726 (NSMICLFQITTSAGW). The Extracellular segment spans residues 1727–1759 (DGLLAPILNSKPPDCDPNKVNPGSSVKGDCGNP). A disulfide bridge connects residues cysteine 1741 and cysteine 1756. Residues 1760–1788 (SVGIFFFVSYIIISFLVVVNMYIAVILEN) form a helical membrane-spanning segment. At 1789–2009 (FSVATEESAE…EGKDEKAKGK (221 aa)) the chain is on the cytoplasmic side. The region spanning 1915–1944 (EEVSAVIIQRAYRRHLLKRTVKQASFTYNK) is the IQ domain. A disordered region spans residues 1984-2009 (PSYDRVTKPIVEKHEQEGKDEKAKGK). Residues 1988-2009 (RVTKPIVEKHEQEGKDEKAKGK) show a composition bias toward basic and acidic residues.

Belongs to the sodium channel (TC 1.A.1.10) family. Nav1.1/SCN1A subfamily. In terms of assembly, the Nav1.1 voltage-gated sodium channel consists of an ion-conducting alpha subunit SCN1A which is functional on its own regulated by one or more beta-1 (SCN1B), beta-2 (SCN2B), beta-3 (SCN3B) and beta-4 (SCN4B) subunits. SCN1B and SCN3B are non-covalently associated with SCN1A. SCN2B and SCN4B are disulfide-linked to SCN1A. SCN1B regulates both the expression at the plasma membrane and the voltage dependence of Nav1.1 inactivation. SCN3B and SCN4B reduce Nav1.1 conductance. Probably interacts with TMEM233; modulates the gating properties of NaV1.1. Interacts with FGF13; regulates the steady-state inactivation of Nav.1.1. In terms of processing, phosphorylation at Ser-1516 by PKC in a highly conserved cytoplasmic loop slows inactivation of the sodium channel and reduces peak sodium currents. In terms of tissue distribution, present in cerebellar Purkinje neurons (at protein level). Expressed by myelinated, non-C-fiber neurons in sensory ganglia.

It localises to the cell membrane. It catalyses the reaction Na(+)(in) = Na(+)(out). Activated by the spider toxins Hm1a and Hm1b (H.maculata, AC P60992 and AC P0DOC5) eliciting acute pain and mechanical allodynia. Functionally, pore-forming subunit of Nav1.1, a voltage-gated sodium (Nav) channel that directly mediates the depolarizing phase of action potentials in excitable membranes. Navs, also called VGSCs (voltage-gated sodium channels) or VDSCs (voltage-dependent sodium channels), operate by switching between closed and open conformations depending on the voltage difference across the membrane. In the open conformation they allow Na(+) ions to selectively pass through the pore, along their electrochemical gradient. The influx of Na(+) ions provokes membrane depolarization, initiating the propagation of electrical signals throughout cells and tissues. By regulating the excitability of neurons, ensures that they respond appropriately to synaptic inputs, maintaining the balance between excitation and inhibition in brain neural circuits. Nav1.1 plays a role in controlling the excitability and action potential propagation from somatosensory neurons, thereby contributing to the sensory perception of mechanically-induced pain. This is Sodium channel protein type 1 subunit alpha from Mus musculus (Mouse).